A 146-amino-acid polypeptide reads, in one-letter code: Aminoglycoside N(6')-acetyltransferase type 1 (146 aa).

The region spanning 1–146 (MIVICDHDNL…RVVFYRKTLG (146 aa)) is the N-acetyltransferase domain. Trp-21, Tyr-66, Glu-79, and Asp-115 together coordinate substrate. Asn-120 provides a ligand contact to acetyl-CoA. A substrate-binding site is contributed by Glu-136.

Homodimer.

The catalysed reaction is kanamycin B + acetyl-CoA = N(6')-acetylkanamycin B + CoA + H(+). Its function is as follows. Catalyzes the transfer of an acetyl group from acetyl-CoA to the 6'-amino group of aminoglycoside molecules conferring resistance to antibiotics containing the purpurosamine ring including amikacin, tobramycin, netilmicin, isepamicin and sisomicin. This chain is Aminoglycoside N(6')-acetyltransferase type 1, found in Serratia marcescens.